Consider the following 433-residue polypeptide: Glutamyl-tRNA reductase (433 aa).

Substrate contacts are provided by residues 49–52 (TCNR), Ser-114, 119–121 (EPQ), and Gln-125. The active-site Nucleophile is the Cys-50. 201–206 (GAGETI) contributes to the NADP(+) binding site.

Belongs to the glutamyl-tRNA reductase family. As to quaternary structure, homodimer.

It carries out the reaction (S)-4-amino-5-oxopentanoate + tRNA(Glu) + NADP(+) = L-glutamyl-tRNA(Glu) + NADPH + H(+). It participates in porphyrin-containing compound metabolism; protoporphyrin-IX biosynthesis; 5-aminolevulinate from L-glutamyl-tRNA(Glu): step 1/2. Its function is as follows. Catalyzes the NADPH-dependent reduction of glutamyl-tRNA(Glu) to glutamate 1-semialdehyde (GSA). This is Glutamyl-tRNA reductase from Histophilus somni (strain 2336) (Haemophilus somnus).